The sequence spans 211 residues: ATP phosphoribosyltransferase (211 aa).

Belongs to the ATP phosphoribosyltransferase family. Short subfamily. Heteromultimer composed of HisG and HisZ subunits.

It localises to the cytoplasm. It catalyses the reaction 1-(5-phospho-beta-D-ribosyl)-ATP + diphosphate = 5-phospho-alpha-D-ribose 1-diphosphate + ATP. It functions in the pathway amino-acid biosynthesis; L-histidine biosynthesis; L-histidine from 5-phospho-alpha-D-ribose 1-diphosphate: step 1/9. Its function is as follows. Catalyzes the condensation of ATP and 5-phosphoribose 1-diphosphate to form N'-(5'-phosphoribosyl)-ATP (PR-ATP). Has a crucial role in the pathway because the rate of histidine biosynthesis seems to be controlled primarily by regulation of HisG enzymatic activity. This Bacillus cereus (strain B4264) protein is ATP phosphoribosyltransferase.